The chain runs to 305 residues: Serine/threonine-protein phosphatase PP1-delta (305 aa).

Mn(2+) contacts are provided by D62, H64, D90, and N122. The active-site Proton donor is H123. H172 and H247 together coordinate Mn(2+).

It belongs to the PPP phosphatase family. As to expression, expressed in male germline including spermatocytes, spermatids and spermatozoa.

The protein localises to the chromosome. It is found in the cell projection. Its subcellular location is the pseudopodium. The protein resides in the cytoplasm. It catalyses the reaction O-phospho-L-seryl-[protein] + H2O = L-seryl-[protein] + phosphate. The catalysed reaction is O-phospho-L-threonyl-[protein] + H2O = L-threonyl-[protein] + phosphate. Its function is as follows. Probable phosphatase which plays a redundant role with gsp-4 in spermatogenesis by regulating sister chromatid segregation during meiosis. In addition, involved in sperm motility by controlling the dynamic disassembly of major sperm proteins (MSP) in the spermatozoan pseudopodium. This is Serine/threonine-protein phosphatase PP1-delta from Caenorhabditis elegans.